The primary structure comprises 121 residues: MARIAGVDIPRDKRVVISLTYVFGIGRTTAEKILAEAGVSEETRVRDLTEDELGRIRDIIDRIKVEGDLRREVSLNIKRLMEIGSYRGLRHRRGLPVRGQNSKNNARTRKGPRRTVANKKK.

Residues 91-121 (HRRGLPVRGQNSKNNARTRKGPRRTVANKKK) are disordered. Residues 106 to 121 (ARTRKGPRRTVANKKK) show a composition bias toward basic residues.

This sequence belongs to the universal ribosomal protein uS13 family. In terms of assembly, part of the 30S ribosomal subunit. Forms a loose heterodimer with protein S19. Forms two bridges to the 50S subunit in the 70S ribosome.

Located at the top of the head of the 30S subunit, it contacts several helices of the 16S rRNA. In the 70S ribosome it contacts the 23S rRNA (bridge B1a) and protein L5 of the 50S subunit (bridge B1b), connecting the 2 subunits; these bridges are implicated in subunit movement. Contacts the tRNAs in the A and P-sites. The polypeptide is Small ribosomal subunit protein uS13 (Bacillus cereus (strain AH187)).